The chain runs to 247 residues: Lys-63-specific deubiquitinase BRCC36 (247 aa).

An N-acetylalanine modification is found at alanine 2. Residues 12–179 enclose the MPN domain; it reads VHLESDAFLV…YTCFQSIQAQ (168 aa). Residues histidine 122, histidine 124, and aspartate 135 each coordinate Zn(2+). Positions 122–135 match the JAMM motif motif; sequence HSHPHITVWPSHVD. Serine 189 bears the Phosphoserine mark.

Belongs to the peptidase M67A family. BRCC36 subfamily. In terms of assembly, component of the ARISC complex, at least composed of UIMC1/RAP80, ABRAXAS1, BRCC3/BRCC36, BABAM2 and BABAM1/NBA1. Component of the BRCA1-A complex, at least composed of BRCA1, BARD1, UIMC1/RAP80, ABRAXAS1, BRCC3/BRCC36, BABAM2 and BABAM1/NBA1. In the BRCA1-A complex, interacts directly with ABRAXAS1 and BABAM2. Component of the BRISC complex, at least composed of ABRAXAS2, BRCC3/BRCC36, BABAM2 and BABAM1/NBA1. Identified in a complex with SHMT2 and the other subunits of the BRISC complex. In the BRISC complex, interacts directly with ABRAXAS2. Identified in a complex with ABRAXAS2 and NUMA1. The BRISC complex interacts with the CSN complex. Component of the BRCA1/BRCA2 containing complex (BRCC), which also contains BRCA1, BRCA2, BARD1, BABAM2 and RAD51. BRCC is a ubiquitin E3 ligase complex that enhances cellular survival following DNA damage. Interacts with BRCA1. Binds polyubiquitin. Interacts with PWWP2B. Interacts with HDAC1; this interaction is enhanced in the presence of PWWP2B. The cofactor is Zn(2+).

Its subcellular location is the nucleus. It localises to the cytoplasm. The protein localises to the cytoskeleton. The protein resides in the spindle pole. Metalloprotease that specifically cleaves 'Lys-63'-linked polyubiquitin chains. Does not have activity toward 'Lys-48'-linked polyubiquitin chains. Component of the BRCA1-A complex, a complex that specifically recognizes 'Lys-63'-linked ubiquitinated histones H2A and H2AX at DNA lesions sites, leading to target the BRCA1-BARD1 heterodimer to sites of DNA damage at double-strand breaks (DSBs). In the BRCA1-A complex, it specifically removes 'Lys-63'-linked ubiquitin on histones H2A and H2AX, antagonizing the RNF8-dependent ubiquitination at double-strand breaks (DSBs). Catalytic subunit of the BRISC complex, a multiprotein complex that specifically cleaves 'Lys-63'-linked ubiquitin in various substrates. Mediates the specific 'Lys-63'-specific deubiquitination associated with the COP9 signalosome complex (CSN), via the interaction of the BRISC complex with the CSN complex. The BRISC complex is required for normal mitotic spindle assembly and microtubule attachment to kinetochores via its role in deubiquitinating NUMA1. Plays a role in interferon signaling via its role in the deubiquitination of the interferon receptor IFNAR1; deubiquitination increases IFNAR1 activity by enhancing its stability and cell surface expression. Acts as a regulator of the NLRP3 inflammasome by mediating deubiquitination of NLRP3, leading to NLRP3 inflammasome assembly. Down-regulates the response to bacterial lipopolysaccharide (LPS) via its role in IFNAR1 deubiquitination. Deubiquitinates HDAC1 and PWWP2B leading to their stabilization. The polypeptide is Lys-63-specific deubiquitinase BRCC36 (BRCC3) (Pongo abelii (Sumatran orangutan)).